A 303-amino-acid polypeptide reads, in one-letter code: Bifunctional protein FolD (303 aa).

NADP(+) contacts are provided by residues 175 to 177 (GVS) and Ile-243.

The protein belongs to the tetrahydrofolate dehydrogenase/cyclohydrolase family. Homodimer.

The enzyme catalyses (6R)-5,10-methylene-5,6,7,8-tetrahydrofolate + NADP(+) = (6R)-5,10-methenyltetrahydrofolate + NADPH. It catalyses the reaction (6R)-5,10-methenyltetrahydrofolate + H2O = (6R)-10-formyltetrahydrofolate + H(+). Its pathway is one-carbon metabolism; tetrahydrofolate interconversion. Its function is as follows. Catalyzes the oxidation of 5,10-methylenetetrahydrofolate to 5,10-methenyltetrahydrofolate and then the hydrolysis of 5,10-methenyltetrahydrofolate to 10-formyltetrahydrofolate. The protein is Bifunctional protein FolD of Xanthomonas oryzae pv. oryzae (strain PXO99A).